A 349-amino-acid chain; its full sequence is Probable trehalose-phosphate phosphatase H (349 aa).

Belongs to the trehalose phosphatase family. It depends on a divalent metal cation as a cofactor.

The catalysed reaction is alpha,alpha-trehalose 6-phosphate + H2O = alpha,alpha-trehalose + phosphate. It participates in glycan biosynthesis; trehalose biosynthesis. Functionally, removes the phosphate from trehalose 6-phosphate to produce free trehalose. Trehalose accumulation in plant may improve abiotic stress tolerance. The chain is Probable trehalose-phosphate phosphatase H (TPPH) from Arabidopsis thaliana (Mouse-ear cress).